Here is an 83-residue protein sequence, read N- to C-terminus: MQAGIHPEYNEVVFQDISTGETFLTRSTIEKTSGDTITLDGKEYPLVRIEVSSASHPFFTGKQSLVDTEGRVEKFRQKYGMRK.

It belongs to the bacterial ribosomal protein bL31 family. Type B subfamily. In terms of assembly, part of the 50S ribosomal subunit.

Its function is as follows. Binds the 23S rRNA. The sequence is that of Large ribosomal subunit protein bL31B from Hydrogenovibrio crunogenus (strain DSM 25203 / XCL-2) (Thiomicrospira crunogena).